The primary structure comprises 318 residues: Ribose-phosphate pyrophosphokinase 1 (318 aa).

Residues 43-45 (DGE) and 102-103 (RQ) each bind ATP. 2 residues coordinate Mg(2+): H136 and D176. Residue K199 is part of the active site. Residues R201, D225, and 229–233 (DTAGT) each bind D-ribose 5-phosphate.

Belongs to the ribose-phosphate pyrophosphokinase family. Class I subfamily. As to quaternary structure, homohexamer. Requires Mg(2+) as cofactor.

The protein resides in the cytoplasm. It carries out the reaction D-ribose 5-phosphate + ATP = 5-phospho-alpha-D-ribose 1-diphosphate + AMP + H(+). It functions in the pathway metabolic intermediate biosynthesis; 5-phospho-alpha-D-ribose 1-diphosphate biosynthesis; 5-phospho-alpha-D-ribose 1-diphosphate from D-ribose 5-phosphate (route I): step 1/1. Its function is as follows. Involved in the biosynthesis of the central metabolite phospho-alpha-D-ribosyl-1-pyrophosphate (PRPP) via the transfer of pyrophosphoryl group from ATP to 1-hydroxyl of ribose-5-phosphate (Rib-5-P). The polypeptide is Ribose-phosphate pyrophosphokinase 1 (Listeria monocytogenes serotype 4b (strain F2365)).